We begin with the raw amino-acid sequence, 282 residues long: Bifunctional protein FolD (282 aa).

Residues Asn165 to Ser167, Ser190, and Ile231 each bind NADP(+).

The protein belongs to the tetrahydrofolate dehydrogenase/cyclohydrolase family. In terms of assembly, homodimer.

It carries out the reaction (6R)-5,10-methylene-5,6,7,8-tetrahydrofolate + NADP(+) = (6R)-5,10-methenyltetrahydrofolate + NADPH. The catalysed reaction is (6R)-5,10-methenyltetrahydrofolate + H2O = (6R)-10-formyltetrahydrofolate + H(+). It functions in the pathway one-carbon metabolism; tetrahydrofolate interconversion. In terms of biological role, catalyzes the oxidation of 5,10-methylenetetrahydrofolate to 5,10-methenyltetrahydrofolate and then the hydrolysis of 5,10-methenyltetrahydrofolate to 10-formyltetrahydrofolate. The polypeptide is Bifunctional protein FolD (Clostridium botulinum (strain Langeland / NCTC 10281 / Type F)).